A 137-amino-acid chain; its full sequence is Small ribosomal subunit protein uS9 (137 aa).

The span at 105 to 117 (LKVEGYLTRDPRA) shows a compositional bias: basic and acidic residues. The interval 105–137 (LKVEGYLTRDPRAKERKKYGLRKARKAPQYSKR) is disordered. Residues 118-137 (KERKKYGLRKARKAPQYSKR) are compositionally biased toward basic residues.

Belongs to the universal ribosomal protein uS9 family.

The polypeptide is Small ribosomal subunit protein uS9 (Cyanothece sp. (strain PCC 7425 / ATCC 29141)).